The chain runs to 455 residues: Bifunctional protein GlmU (455 aa).

A pyrophosphorylase region spans residues M1–R226. Residues L8–G11, K22, Q73, G78–T79, Y99–D101, G136, E151, N166, and N224 each bind UDP-N-acetyl-alpha-D-glucosamine. Position 101 (D101) interacts with Mg(2+). N224 is a binding site for Mg(2+). The interval T227–K247 is linker. The segment at G248–K455 is N-acetyltransferase. Residues R330 and K348 each coordinate UDP-N-acetyl-alpha-D-glucosamine. Catalysis depends on H360, which acts as the Proton acceptor. UDP-N-acetyl-alpha-D-glucosamine contacts are provided by Y363 and N374. Acetyl-CoA contacts are provided by residues A377, N383–Y384, S402, A420, and R437.

This sequence in the N-terminal section; belongs to the N-acetylglucosamine-1-phosphate uridyltransferase family. The protein in the C-terminal section; belongs to the transferase hexapeptide repeat family. In terms of assembly, homotrimer. Requires Mg(2+) as cofactor.

Its subcellular location is the cytoplasm. It catalyses the reaction alpha-D-glucosamine 1-phosphate + acetyl-CoA = N-acetyl-alpha-D-glucosamine 1-phosphate + CoA + H(+). The catalysed reaction is N-acetyl-alpha-D-glucosamine 1-phosphate + UTP + H(+) = UDP-N-acetyl-alpha-D-glucosamine + diphosphate. The protein operates within nucleotide-sugar biosynthesis; UDP-N-acetyl-alpha-D-glucosamine biosynthesis; N-acetyl-alpha-D-glucosamine 1-phosphate from alpha-D-glucosamine 6-phosphate (route II): step 2/2. It participates in nucleotide-sugar biosynthesis; UDP-N-acetyl-alpha-D-glucosamine biosynthesis; UDP-N-acetyl-alpha-D-glucosamine from N-acetyl-alpha-D-glucosamine 1-phosphate: step 1/1. Its pathway is bacterial outer membrane biogenesis; LPS lipid A biosynthesis. Catalyzes the last two sequential reactions in the de novo biosynthetic pathway for UDP-N-acetylglucosamine (UDP-GlcNAc). The C-terminal domain catalyzes the transfer of acetyl group from acetyl coenzyme A to glucosamine-1-phosphate (GlcN-1-P) to produce N-acetylglucosamine-1-phosphate (GlcNAc-1-P), which is converted into UDP-GlcNAc by the transfer of uridine 5-monophosphate (from uridine 5-triphosphate), a reaction catalyzed by the N-terminal domain. This chain is Bifunctional protein GlmU, found in Francisella tularensis subsp. novicida (strain U112).